Reading from the N-terminus, the 642-residue chain is Threonine--tRNA ligase (642 aa).

The TGS domain maps to M1–T61. The tract at residues D243–P534 is catalytic. Residues C334, H385, and H511 each contribute to the Zn(2+) site.

It belongs to the class-II aminoacyl-tRNA synthetase family. In terms of assembly, homodimer. It depends on Zn(2+) as a cofactor.

The protein resides in the cytoplasm. It carries out the reaction tRNA(Thr) + L-threonine + ATP = L-threonyl-tRNA(Thr) + AMP + diphosphate + H(+). Catalyzes the attachment of threonine to tRNA(Thr) in a two-step reaction: L-threonine is first activated by ATP to form Thr-AMP and then transferred to the acceptor end of tRNA(Thr). Also edits incorrectly charged L-seryl-tRNA(Thr). This is Threonine--tRNA ligase from Tolumonas auensis (strain DSM 9187 / NBRC 110442 / TA 4).